Consider the following 462-residue polypeptide: Serine--tRNA ligase, cytoplasmic (462 aa).

Lys241 is covalently cross-linked (Glycyl lysine isopeptide (Lys-Gly) (interchain with G-Cter in URM1)). 246–248 (TSE) lines the L-serine pocket. ATP is bound by residues 279–281 (RRE) and Val295. An L-serine-binding site is contributed by Glu302. Residues Lys350 and Lys351 each participate in a glycyl lysine isopeptide (Lys-Gly) (interchain with G-Cter in URM1) cross-link. Residue 366–369 (ELVS) coordinates ATP. A cysteine persulfide mark is found at Cys373 and Cys400. Residue Thr404 participates in L-serine binding.

It belongs to the class-II aminoacyl-tRNA synthetase family. Type-1 seryl-tRNA synthetase subfamily. As to quaternary structure, homodimer; the tRNA molecule probably binds across the dimer. Interacts with ABP140; interaction is required for the tRNA N(3)-methylcytidine methyltransferase activity of ABP140. In terms of processing, conjugated to URM1, a ubiquitin-like protein, in response to oxidative stresses. The attachment of URM1 to lysine residues exclusively depends on the presence of a peroxidatic cysteine in the target protein, with low specificity for the particular residue, motif, or structural context at which urmylation can occur. The URM1-conjugation reaction is mechanistically and directly coupled to the process of cysteine persulfidation, transfering the sulfur atom of the URM1 thiocarboxyl group to redox-active cysteine residues in the target protein if it is exposed to oxidative conditions. Persulfidated on specific redox-active cysteine residues. Persulfidation (also called protein S-sulfhydration) may provide a molecular mechanism that enables cells to protect vulnerable cysteine residues from reactive oxygen species (ROS) under stress conditions.

Its subcellular location is the cytoplasm. It localises to the cytosol. It catalyses the reaction tRNA(Ser) + L-serine + ATP = L-seryl-tRNA(Ser) + AMP + diphosphate + H(+). Catalyzes the attachment of serine to tRNA(Ser) in a two-step reaction: serine is first activated by ATP to form Ser-AMP and then transferred to the acceptor end of tRNA(Ser). The sequence is that of Serine--tRNA ligase, cytoplasmic (SES1) from Saccharomyces cerevisiae (strain ATCC 204508 / S288c) (Baker's yeast).